A 360-amino-acid chain; its full sequence is Peptide chain release factor 1 (360 aa).

N5-methylglutamine is present on Gln235.

The protein belongs to the prokaryotic/mitochondrial release factor family. Post-translationally, methylated by PrmC. Methylation increases the termination efficiency of RF1.

Its subcellular location is the cytoplasm. Functionally, peptide chain release factor 1 directs the termination of translation in response to the peptide chain termination codons UAG and UAA. The polypeptide is Peptide chain release factor 1 (Bordetella parapertussis (strain 12822 / ATCC BAA-587 / NCTC 13253)).